A 500-amino-acid polypeptide reads, in one-letter code: Cytochrome P450 11B2, mitochondrial (500 aa).

The transit peptide at 1 to 24 (MALRVTADVWLARPWQCLHRTRAL) directs the protein to the mitochondrion. Residue Phe381 participates in 21-hydroxyprogesterone binding. Residue Cys447 participates in heme binding.

The protein belongs to the cytochrome P450 family. It depends on heme as a cofactor.

It is found in the mitochondrion inner membrane. It catalyses the reaction a steroid + 2 reduced [adrenodoxin] + O2 + 2 H(+) = an 11beta-hydroxysteroid + 2 oxidized [adrenodoxin] + H2O. The catalysed reaction is 21-hydroxyprogesterone + 2 reduced [adrenodoxin] + O2 + 2 H(+) = corticosterone + 2 oxidized [adrenodoxin] + H2O. It carries out the reaction corticosterone + 2 reduced [adrenodoxin] + O2 + 2 H(+) = 18-hydroxycorticosterone + 2 oxidized [adrenodoxin] + H2O. The enzyme catalyses 18-hydroxycorticosterone + 2 reduced [adrenodoxin] + O2 + 2 H(+) = aldosterone + 2 oxidized [adrenodoxin] + 2 H2O. It catalyses the reaction 11-deoxycortisol + 2 reduced [adrenodoxin] + O2 + 2 H(+) = cortisol + 2 oxidized [adrenodoxin] + H2O. The catalysed reaction is 21-hydroxyprogesterone + 2 reduced [adrenodoxin] + O2 + 2 H(+) = 18-hydroxy-11-deoxycorticosterone + 2 oxidized [adrenodoxin] + H2O. It carries out the reaction cortisol + 2 reduced [adrenodoxin] + O2 + 2 H(+) = 18-hydroxycortisol + 2 oxidized [adrenodoxin] + H2O. The enzyme catalyses 18-hydroxycortisol + 2 reduced [adrenodoxin] + O2 + 2 H(+) = 18-oxocortisol + 2 oxidized [adrenodoxin] + 2 H2O. Its pathway is steroid biosynthesis. Its function is as follows. A cytochrome P450 monooxygenase that catalyzes the biosynthesis of aldosterone, the main mineralocorticoid in the human body responsible for salt and water homeostasis, thus involved in blood pressure regulation, arterial hypertension, and the development of heart failure. Catalyzes three sequential oxidative reactions of 11-deoxycorticosterone (21-hydroxyprogesterone), namely 11-beta hydroxylation, followed by two successive oxidations at C18 yielding 18-hydroxy and then 18-oxo intermediates (that would not leave the enzyme active site during the consecutive hydroxylation reactions), ending with the formation of aldosterone. Can also produce 18-hydroxycortisol and 18-oxocortisol, derived from successive oxidations of cortisol at C18, normally found at very low levels, but significantly increased in primary aldosteronism, the most common form of secondary hypertension. Mechanistically, uses molecular oxygen inserting one oxygen atom into a substrate and reducing the second into a water molecule. Two electrons are provided by NADPH via a two-protein mitochondrial transfer system comprising flavoprotein FDXR (adrenodoxin/ferredoxin reductase) and nonheme iron-sulfur protein FDX1 or FDX2 (adrenodoxin/ferredoxin). Could also be involved in the androgen metabolic pathway. This chain is Cytochrome P450 11B2, mitochondrial (Cyp11b2), found in Mus musculus (Mouse).